Reading from the N-terminus, the 92-residue chain is Small ribosomal subunit protein uS15c (92 aa).

It belongs to the universal ribosomal protein uS15 family. Part of the 30S ribosomal subunit.

Its subcellular location is the plastid. The protein resides in the chloroplast. The polypeptide is Small ribosomal subunit protein uS15c (rps15-A) (Lemna minor (Common duckweed)).